Consider the following 104-residue polypeptide: Inner membrane protein YjcH (104 aa).

Residues 1–24 lie on the Cytoplasmic side of the membrane; sequence MNGTIYQRIEDNAHFRELVEKRQR. The helical transmembrane segment at 25–47 threads the bilayer; sequence FATILSIIMLAVYIGFILLIAFA. At 48 to 61 the chain is on the periplasmic side; it reads PGWLGTPLNPNTSV. Residues 62–84 form a helical membrane-spanning segment; the sequence is TRGIPIGVGVIVISFVLTGIYIW. Over 85–104 the chain is Cytoplasmic; it reads RANGEFDRLNNEVLHEVQAS.

The protein resides in the cell inner membrane. The sequence is that of Inner membrane protein YjcH (yjcH) from Escherichia coli (strain K12).